We begin with the raw amino-acid sequence, 156 residues long: Small ribosomal subunit protein uS7 (156 aa).

It belongs to the universal ribosomal protein uS7 family. As to quaternary structure, part of the 30S ribosomal subunit. Contacts proteins S9 and S11.

Its function is as follows. One of the primary rRNA binding proteins, it binds directly to 16S rRNA where it nucleates assembly of the head domain of the 30S subunit. Is located at the subunit interface close to the decoding center, probably blocks exit of the E-site tRNA. This is Small ribosomal subunit protein uS7 from Campylobacter curvus (strain 525.92).